Here is a 257-residue protein sequence, read N- to C-terminus: MSMGPAAGEGCGLCGADGGGCCSRHRHDDDGFPFVFPPSACQGIGAPAPPVHEFQFFGNDGGGDDGESVAWLFDDYPPPSPVAAAAGMHHRQPPYDGVVAPPSLFRRNTGAGGLTFDVSLGERPDLDAGLGLGGGGGRHAEAAASATIMSYCGSTFTDAASSMPKEMVAAMADDGESLNPNTVVGAMVEREAKLMRYKEKRKKRCYEKQIRYASRKAYAEMRPRVRGRFAKEPDQEAVAPPSTYVDPSRLELGQWFR.

S68 bears the Phosphoserine; by CK1 mark. A CCT domain is found at 190 to 232 (REAKLMRYKEKRKKRCYEKQIRYASRKAYAEMRPRVRGRFAKE). The Nuclear localization signal motif lies at 198–204 (KEKRKKR). The interval 226 to 245 (RGRFAKEPDQEAVAPPSTYV) is disordered.

In terms of assembly, interacts with HD16/EL1. Phosphorylated at Ser-68 by HD16/EL1, a casein kinase 1. As to expression, expressed in the apical meristem, developing leaves, leaf sheaths of young seedling, root meristem, epidermal layer of developing stems and branch-primordia of developing panicles.

The protein resides in the nucleus. In terms of biological role, probable transcription factor involved in the regulation of flowering time under long day (LD) conditions. Plays a major role as repressor of flowering. Controls flowering time by negatively regulating the expression of EHD1 and HD3A. This is Transcription factor GHD7 from Oryza sativa subsp. japonica (Rice).